Here is a 519-residue protein sequence, read N- to C-terminus: Pleckstrin homology domain-containing family A member 8 (519 aa).

A PH domain is found at Met1 to Ala93. Position 139 is a phosphothreonine (Thr139). Ser145 bears the Phosphoserine mark. Thr153 carries the post-translational modification Phosphothreonine. The tract at residues Thr310–Val519 is glycolipid transfer protein homology domain.

In terms of assembly, homodimer. Interacts with ARF1; the interaction together with phosphatidylinositol 4-phosphate binding is required for FAPP2 GlcCer transfer ability. As to expression, expressed in kidney cell lines.

The protein localises to the golgi apparatus. It localises to the trans-Golgi network membrane. Its subcellular location is the membrane. Its function is as follows. Cargo transport protein that is required for apical transport from the Golgi complex. Transports AQP2 from the trans-Golgi network (TGN) to sites of AQP2 phosphorylation. Mediates the non-vesicular transport of glucosylceramide (GlcCer) from the trans-Golgi network (TGN) to the plasma membrane and plays a pivotal role in the synthesis of complex glycosphingolipids. Binding of both phosphatidylinositol 4-phosphate (PIP) and ARF1 are essential for the GlcCer transfer ability. Also required for primary cilium formation, possibly by being involved in the transport of raft lipids to the apical membrane, and for membrane tubulation. The polypeptide is Pleckstrin homology domain-containing family A member 8 (PLEKHA8) (Homo sapiens (Human)).